A 55-amino-acid chain; its full sequence is Large ribosomal subunit protein bL33 (55 aa).

Over residues Met1 to Leu11 the composition is skewed to basic and acidic residues. Residues Met1–Glu32 are disordered. A compositionally biased stretch (polar residues) spans Ser13–Ser24.

It belongs to the bacterial ribosomal protein bL33 family.

The sequence is that of Large ribosomal subunit protein bL33 from Polynucleobacter necessarius subsp. necessarius (strain STIR1).